The following is a 607-amino-acid chain: MILLAFSSGRRLDFVHRSGVFFFQTLLWILCATVCGTEQYFNVEVWLQKYGYLPPTDPRMSVLRSAETMQSALAAMQQFYGINMTGKVDRNTIDWMKKPRCGVPDQTRGSSKFNIRRKRYALTGQKWQHKHITYSIKNVTPKVGDPETRRAIRRAFDVWQNVTPLTFEEVPYSELENGKRDVDITIIFASGFHGDRSPFDGEGGFLAHAYFPGPGIGGDTHFDSDEPWTLGNPNHDGNDLFLVAVHELGHALGLEHSNDPTAIMAPFYQYMETDNFKLPNDDLQGIQKIYGPPDKIPPPTRPLPTVPPHRSVPPADPRKNDRPKPPRPPTGRPSYPGAKPNICDGNFNTLAILRREMFVFKDQWFWRVRNNRVMDGYPMQITYFWRGLPPSIDAVYENSDGNFVFFKGNKYWVFKDTTLQPGYPHDLITLGNGIPPHGIDSAIWWEDVGKTYFFKGDRYWRYSEEMKTMDPGYPKPITIWKGIPESPQGAFVHKENGFTYFYKGKEYWKFNNQILKVEPGYPRSILKDFMGCDGPTDRDKEGLSPPDDVDIVIKLDNTASTVKAIAIVIPCILALCLLVLVYTVFQFKRKGTPRHILYCKRSMQEWV.

Residues 1 to 31 (MILLAFSSGRRLDFVHRSGVFFFQTLLWILC) form the signal peptide. Positions 32 to 119 (ATVCGTEQYF…SSKFNIRRKR (88 aa)) are excised as a propeptide. A glycan (N-linked (GlcNAc...) asparagine) is linked at N83. The short motif at 99-106 (PRCGVPDQ) is the Cysteine switch element. Position 101 (C101) interacts with Zn(2+). Residues 120–564 (YALTGQKWQH…LDNTASTVKA (445 aa)) lie on the Extracellular side of the membrane. D183 contacts Ca(2+). Zn(2+) contacts are provided by H193 and D195. Ca(2+)-binding residues include D200, G201, G203, and F205. H208 serves as a coordination point for Zn(2+). Ca(2+) is bound by residues G215, G217, and D219. H221 serves as a coordination point for Zn(2+). D223 and E226 together coordinate Ca(2+). H246 lines the Zn(2+) pocket. The active site involves E247. The Zn(2+) site is built by H250 and H256. Positions 281–340 (DDLQGIQKIYGPPDKIPPPTRPLPTVPPHRSVPPADPRKNDRPKPPRPPTGRPSYPGAKP) are disordered. The span at 294-315 (DKIPPPTRPLPTVPPHRSVPPA) shows a compositional bias: pro residues. 4 Hemopexin repeats span residues 340–388 (PNIC…WRGL), 389–434 (PPSI…GNGI), 436–484 (PHGI…KGIP), and 485–532 (ESPQ…FMGC). An intrachain disulfide couples C343 to C532. Residues 565-585 (IAIVIPCILALCLLVLVYTVF) traverse the membrane as a helical segment. Topologically, residues 586–607 (QFKRKGTPRHILYCKRSMQEWV) are cytoplasmic.

Belongs to the peptidase M10A family. In terms of assembly, interacts with CSPG4 through CSPG4 chondroitin sulfate glycosaminoglycan. Zn(2+) serves as cofactor. Ca(2+) is required as a cofactor. The precursor is cleaved by a furin endopeptidase. In terms of tissue distribution, strongly expressed in the lung, brain and smooth muscle cells. Weakly detectable in the spleen and liver and indetectable in the heart, skeletal muscle and kidney.

The protein resides in the cell membrane. It localises to the secreted. It is found in the extracellular space. Its subcellular location is the extracellular matrix. Functionally, endopeptidase that degrades various components of the extracellular matrix, such as collagen type III and fibronectin. Activates progelatinase A. Involved in the matrix remodeling of blood vessels. The short isoform efficiently converts progelatinase A to the intermediate form but not to the mature one. It has no effect on type I, II, IV and V collagen. However, upon interaction with CSPG4, it may be involved in degradation and invasion of type I collagen by melanoma cells. This chain is Matrix metalloproteinase-16 (Mmp16), found in Rattus norvegicus (Rat).